A 346-amino-acid chain; its full sequence is Glucose-6-phosphatase 3 (346 aa).

The Lumenal segment spans residues 1-24 (MESTLSAGIIMAEALQNRLPGLEN). Residues 25–45 (MWLWVTFLGDPKNLFQFCFPA) form a helical membrane-spanning segment. Over 46–56 (AYYASRRLGIS) the chain is Cytoplasmic. Residues 57–77 (VLWITFIAEWLNLVFKWFLFG) traverse the membrane as a helical segment. Topologically, residues 78-108 (DRPFWWVHESGYSTQTPIQIHQFPSSCETGP) are lumenal. R79 serves as a coordination point for substrate. A helical membrane pass occupies residues 109–129 (GSPSGHCMITGAALWPVMTAI). Catalysis depends on H114, which acts as the Proton donor. Residues 130–138 (SSQVASRSR) are Cytoplasmic-facing. A helical transmembrane segment spans residues 139–159 (SPWVRVIPGLAYCTFLLAVGL). Residues 160 to 167 (SRVFLLAH) lie on the Lumenal side of the membrane. Position 161 (R161) interacts with substrate. The active-site Nucleophile is the H167. The chain crosses the membrane as a helical span at residues 168–186 (FPHQVLGGLIVGAALGWLM). The Cytoplasmic portion of the chain corresponds to 187-197 (SPRVPMERELS). A helical transmembrane segment spans residues 198 to 218 (FYGLTALALMLGASLMYWTLF). The Lumenal segment spans residues 219–254 (TLGLDLSWSINLASKWCERPEWVHMDSRPFASLSRD). A helical transmembrane segment spans residues 255 to 273 (SGSALGLGIALHTPCYAQI). The Cytoplasmic segment spans residues 274–283 (RRAHLGNGQK). Residues 284–304 (IACFVLAMGLLVFLEWLGYPP) form a helical membrane-spanning segment. The Lumenal segment spans residues 305-307 (QIS). The helical transmembrane segment at 308–328 (LFYIFNFLKYTLWPCLVLALV) threads the bilayer. The Cytoplasmic portion of the chain corresponds to 329–346 (PWVVHTLSDQEAPPIRSS).

The protein belongs to the glucose-6-phosphatase family. As to expression, widely expressed. Highly expressed in heart and testis and to a lower extent in spleen, stomach, small intestine, skeletal muscle and uterus. Expressed in muscle, brain, thymus, lung, kidney, spleen and pancreas (at protein level). In the brain, expressed in astrocytes (at protein level).

Its subcellular location is the endoplasmic reticulum membrane. It carries out the reaction D-glucose 6-phosphate + H2O = D-glucose + phosphate. It functions in the pathway carbohydrate biosynthesis; gluconeogenesis. With respect to regulation, inhibited by vanadate. In terms of biological role, hydrolyzes glucose-6-phosphate to glucose in the endoplasmic reticulum. May form with the glucose-6-phosphate transporter (SLC37A4/G6PT) a ubiquitously expressed complex responsible for glucose production through glycogenolysis and gluconeogenesis. Probably required for normal neutrophil function. The sequence is that of Glucose-6-phosphatase 3 (G6pc3) from Mus musculus (Mouse).